We begin with the raw amino-acid sequence, 506 residues long: Galactose/methyl galactoside import ATP-binding protein MglA (506 aa).

ABC transporter domains are found at residues 14–249 and 264–506; these read LEMS…VGRS and VILE…SLHL. 46–53 contributes to the ATP binding site; sequence GENGAGKS.

This sequence belongs to the ABC transporter superfamily. Galactose/methyl galactoside importer (TC 3.A.1.2.3) family. In terms of assembly, the complex is composed of one ATP-binding protein (MglA), two transmembrane proteins (MglC) and a solute-binding protein (MglB).

The protein resides in the cell inner membrane. It catalyses the reaction D-galactose(out) + ATP + H2O = D-galactose(in) + ADP + phosphate + H(+). The catalysed reaction is methyl beta-D-galactoside(out) + ATP + H2O = methyl beta-D-galactoside(in) + ADP + phosphate + H(+). Its function is as follows. Part of the ABC transporter complex MglABC involved in galactose/methyl galactoside import. Responsible for energy coupling to the transport system. The polypeptide is Galactose/methyl galactoside import ATP-binding protein MglA (Escherichia coli (strain K12)).